Consider the following 249-residue polypeptide: Salivary antigen-5 (249 aa).

The signal sequence occupies residues 1–26 (MAKTQCPLVFSLLALALIGTLQSSAA). An SCP domain is found at 50–193 (SIHNYYRNLT…WYAGYLVCNY (144 aa)). Residues Asn-57, Asn-127, and Asn-168 are each glycosylated (N-linked (GlcNAc...) asparagine).

It belongs to the CRISP family. Venom allergen 5-like subfamily. In terms of assembly, monomeric in solution. Cu(2+) serves as cofactor. In terms of tissue distribution, saliva (at protein level). Salivary gland (at protein level).

Its subcellular location is the secreted. Antioxidant protein that scavenges superoxide radicals. Removes superoxide radicals produced by PMA-stimulated host neutrophils. Inhibits host platelet aggregation induced by low doses of collagen by interfering with the pro-aggregatory properties of reactive oxygen species on platelets. Binds to heparin and sulfated glycosaminoglycans. The polypeptide is Salivary antigen-5 (Dipetalogaster maximus (Blood-sucking bug)).